The sequence spans 94 residues: Acylphosphatase (94 aa).

Positions 8–94 (ALHVIVKGRV…RGYTDFRIEV (87 aa)) constitute an Acylphosphatase-like domain. Catalysis depends on residues Arg-23 and Asn-41.

It belongs to the acylphosphatase family.

It carries out the reaction an acyl phosphate + H2O = a carboxylate + phosphate + H(+). This chain is Acylphosphatase (acyP), found in Treponema denticola (strain ATCC 35405 / DSM 14222 / CIP 103919 / JCM 8153 / KCTC 15104).